The following is a 224-amino-acid chain: Transcription cofactor HES-6 (224 aa).

The interval Met1–Pro31 is disordered. The span at Ser8–Asp25 shows a compositional bias: basic and acidic residues. A bHLH domain is found at Asp25 to Ala77. An Orange domain is found at Phe96–Leu129. Residues Gly146–Gly209 are disordered. Residues Arg158–Leu171 are compositionally biased toward low complexity. Positions Leu181–Glu190 are enriched in acidic residues. Positions Trp221–Trp224 match the WRPW motif motif.

Transcription repression requires formation of a complex with a corepressor protein of the Groucho/TLE family. Interacts with HES1. In terms of tissue distribution, expressed in both undifferentiated and differentiated cells. High levels of expression are observed in several embryonic tissues including the nervous system, muscle and thymus. In the nervous system, initially expressed in the closing neural tube, then in the spinal cord, cranial and dorsal root ganglia, and brain neuroepithelium. Also expressed in epithelial cells of the embryonic respiratory, urinary and digestive systems. In the limb buds, expressed in skeletal muscle and presumptive tendons.

It is found in the nucleus. Its function is as follows. Does not bind DNA itself but suppresses both HES1-mediated N box-dependent transcriptional repression and binding of HES1 to E box sequences. Also suppresses HES1-mediated inhibition of the heterodimer formed by ASCL1/MASH1 and TCF3/E47, allowing ASCL1 and TCF3 to up-regulate transcription in its presence. Promotes cell differentiation. This Mus musculus (Mouse) protein is Transcription cofactor HES-6.